Consider the following 389-residue polypeptide: UDP-GlcNAc:betaGal beta-1,3-N-acetylglucosaminyltransferase 8 (389 aa).

Topologically, residues methionine 1–glutamine 7 are cytoplasmic. Residues leucine 8 to glutamate 24 form a helical; Signal-anchor for type II membrane protein membrane-spanning segment. Over tryptophan 25–cysteine 389 the chain is Lumenal. The disordered stretch occupies residues proline 36 to serine 57. Asparagine 55 and asparagine 212 each carry an N-linked (GlcNAc...) asparagine glycan.

It belongs to the glycosyltransferase 31 family. As to quaternary structure, interacts with B3GNT2; this interaction greatly increases B3GNT2 catalytic activity, independently of B3GNT8 enzymatic activity.

It is found in the golgi apparatus membrane. The protein operates within protein modification; protein glycosylation. Beta-1,3-N-acetylglucosaminyltransferase that plays a role in the elongation of specific branch structures of multiantennary N-glycans. Has strong activity towards tetraantennary N-glycans and 2,6 triantennary glycans. This chain is UDP-GlcNAc:betaGal beta-1,3-N-acetylglucosaminyltransferase 8, found in Mus musculus (Mouse).